The following is a 340-amino-acid chain: Phosphate acyltransferase (340 aa).

This sequence belongs to the PlsX family. As to quaternary structure, homodimer. Probably interacts with PlsY.

The protein localises to the cytoplasm. It catalyses the reaction a fatty acyl-[ACP] + phosphate = an acyl phosphate + holo-[ACP]. It functions in the pathway lipid metabolism; phospholipid metabolism. Its function is as follows. Catalyzes the reversible formation of acyl-phosphate (acyl-PO(4)) from acyl-[acyl-carrier-protein] (acyl-ACP). This enzyme utilizes acyl-ACP as fatty acyl donor, but not acyl-CoA. In Helicobacter pylori (strain HPAG1), this protein is Phosphate acyltransferase.